The sequence spans 217 residues: Octanoyltransferase (217 aa).

Residues 32–207 (SDSPDELWIV…TLSQLLGYQQ (176 aa)) enclose the BPL/LPL catalytic domain. Residues 71-78 (RGGQVTYH), 138-140 (SLG), and 151-153 (GLA) contribute to the substrate site. The active-site Acyl-thioester intermediate is the Cys-169.

Belongs to the LipB family.

It localises to the cytoplasm. The enzyme catalyses octanoyl-[ACP] + L-lysyl-[protein] = N(6)-octanoyl-L-lysyl-[protein] + holo-[ACP] + H(+). It functions in the pathway protein modification; protein lipoylation via endogenous pathway; protein N(6)-(lipoyl)lysine from octanoyl-[acyl-carrier-protein]: step 1/2. Its function is as follows. Catalyzes the transfer of endogenously produced octanoic acid from octanoyl-acyl-carrier-protein onto the lipoyl domains of lipoate-dependent enzymes. Lipoyl-ACP can also act as a substrate although octanoyl-ACP is likely to be the physiological substrate. This is Octanoyltransferase from Shewanella sp. (strain MR-7).